Consider the following 873-residue polypeptide: MLNFFKNLFDDNAREVKKLQRVVEEINGLEEKIAKLTDEELQGKTAEFKQLLENGKTLNDILPEAFAVCREASKRVLGMRHYDVQLIGGMVLHQGRIAEMRTGEGKTLVATLPVYLNALSGKGVHVITVNDYLATRDSEWMGKLYRFLGLSVGLIVHGIKPEDRRLAYNADITYGTNNEFGFDYLRDNMSLHPEQLVQRELNYSIVDEVDSILIDEARTPLIISGVADKPTHLYYTMAKIVPKLVREVDYTVDEKAHNVLLTEEGVSKAEKLLGIENLYDEANMEINHHLNQSLKAHGLMHRDRDYVVRDGEVVIVDEFTGRLMFGRRYSDGLHQAIEAKEGVKIEKESQTLATITFQNYFRMYNKIAGMTGTALTEEEEFRKIYGLDVVVIPTNKPTIRKDLADLVYKTEMAKFRAVVEDVVQRHETGQPVLVGTISIAKSELLSSLLKRRGVPHQVLNAKHHDKEAEIIAQAGRFKAVTIATNMAGRGTDILLGGNPEVFARAEMRKKGITEENAPAEYQQIVEKYMALCNEERAKVMEKGGLHIIGTERHESRRIDNQLRGRAGRQGDPGSSQFYIALEDDLMRLFGSDNIAGLMDRLGMEEDVPIENALITKSIETAQKRVESRNFSIRKHVLDYDDVMNQQREVIYAQRRKVLTGHNLAENIKDTITAVVERSVDMYCPEGVHEEEWDLAGLLEYAEGLYMPNHNIEPAELEEMGRQGLKDELLERTMSLYQKREEELGAETLREIERIVLLRLVDEKWMDHLDAMDQLREGIGLRAYGSKDPVIEYKFEAYEMFNNMIANIQDDVVRYIFRVNVAAPQERTQRQVVENRYAEEEGKQPIRKENQIGRNDDCPCGSGKKYKKCCGKNA.

ATP contacts are provided by residues glutamine 85, 103–107, and aspartate 492; that span reads GEGKT. The span at 835–856 shows a compositional bias: basic and acidic residues; it reads RYAEEEGKQPIRKENQIGRNDD. Positions 835–873 are disordered; that stretch reads RYAEEEGKQPIRKENQIGRNDDCPCGSGKKYKKCCGKNA. 4 residues coordinate Zn(2+): cysteine 857, cysteine 859, cysteine 868, and cysteine 869. The span at 863 to 873 shows a compositional bias: basic residues; it reads KKYKKCCGKNA.

The protein belongs to the SecA family. Monomer and homodimer. Part of the essential Sec protein translocation apparatus which comprises SecA, SecYEG and auxiliary proteins SecDF. Other proteins may also be involved. Zn(2+) serves as cofactor.

It localises to the cell membrane. The protein resides in the cytoplasm. It catalyses the reaction ATP + H2O + cellular proteinSide 1 = ADP + phosphate + cellular proteinSide 2.. Part of the Sec protein translocase complex. Interacts with the SecYEG preprotein conducting channel. Has a central role in coupling the hydrolysis of ATP to the transfer of proteins into and across the cell membrane, serving as an ATP-driven molecular motor driving the stepwise translocation of polypeptide chains across the membrane. This Desulforamulus reducens (strain ATCC BAA-1160 / DSM 100696 / MI-1) (Desulfotomaculum reducens) protein is Protein translocase subunit SecA.